The sequence spans 206 residues: FMN-dependent NADH:quinone oxidoreductase 2 (206 aa).

FMN-binding positions include S10, 16 to 18, and 140 to 143; these read SYS and SCGG.

This sequence belongs to the azoreductase type 1 family. Homodimer. The cofactor is FMN.

The enzyme catalyses 2 a quinone + NADH + H(+) = 2 a 1,4-benzosemiquinone + NAD(+). It catalyses the reaction N,N-dimethyl-1,4-phenylenediamine + anthranilate + 2 NAD(+) = 2-(4-dimethylaminophenyl)diazenylbenzoate + 2 NADH + 2 H(+). Functionally, quinone reductase that provides resistance to thiol-specific stress caused by electrophilic quinones. In terms of biological role, also exhibits azoreductase activity. Catalyzes the reductive cleavage of the azo bond in aromatic azo compounds to the corresponding amines. The sequence is that of FMN-dependent NADH:quinone oxidoreductase 2 from Cupriavidus pinatubonensis (strain JMP 134 / LMG 1197) (Cupriavidus necator (strain JMP 134)).